We begin with the raw amino-acid sequence, 211 residues long: Uridine kinase (211 aa).

Gly-13–Ser-20 contacts ATP.

Belongs to the uridine kinase family.

The protein localises to the cytoplasm. The catalysed reaction is uridine + ATP = UMP + ADP + H(+). It carries out the reaction cytidine + ATP = CMP + ADP + H(+). Its pathway is pyrimidine metabolism; CTP biosynthesis via salvage pathway; CTP from cytidine: step 1/3. It functions in the pathway pyrimidine metabolism; UMP biosynthesis via salvage pathway; UMP from uridine: step 1/1. This is Uridine kinase from Shewanella pealeana (strain ATCC 700345 / ANG-SQ1).